Reading from the N-terminus, the 5538-residue chain is Leashin (5538 aa).

Gly residues predominate over residues 1–10 (MFRALMGGGR). Disordered stretches follow at residues 1–270 (MFRA…SSMG), 286–315 (EVDP…TFGI), 331–365 (LPLP…PHTH), 510–555 (SRDA…KKSS), 596–712 (TESV…DISQ), 800–901 (AATS…FPTG), 913–944 (ALAS…PVPT), 1027–1145 (NRPH…KDSF), 1164–1297 (VLSG…GYRD), 1310–1398 (PTPP…RYVS), 1432–1993 (EDPT…TSVE), 2067–2146 (SELL…VNAF), 2165–2207 (NRLS…SPPA), 2233–3065 (PEAA…SQPI), 3077–3894 (MAEE…EIVS), 3910–4034 (EEKA…DTGL), 4072–4128 (KFKQ…EEPL), 4238–4421 (EAAL…SNQA), 4442–4463 (PRPL…DEND), 4509–4698 (LRRQ…TSNT), 4733–4850 (KTDG…VEQA), and 4910–5052 (ALTV…RHRR). A woronin bodies-binding region region spans residues 1–1100 (MFRALMGGGR…RASGVQLIDR (1100 aa)). Residues 14–23 (SRSTTSSSKS) show a composition bias toward low complexity. Composition is skewed to basic and acidic residues over residues 42–51 (SRGDDRDRGL) and 89–167 (VEHD…ERSR). Residues 299–313 (AGTTSEPPKPSNTTF) show a composition bias toward polar residues. Pro residues predominate over residues 334-352 (PASPTSPPEPVPTTAPYAP). Residues 514–523 (PRKHHYRQRR) show a composition bias toward basic residues. The span at 598-607 (SVSTARRSQT) shows a compositional bias: polar residues. Residues 639–655 (HRSRSRSHSSSRNRRHS) show a composition bias toward basic residues. Residues 660-674 (AAVGAAVGSGAIALA) show a composition bias toward low complexity. Over residues 682–698 (SRSRSRSRFPRKSKGRK) the composition is skewed to basic residues. Positions 809 to 825 (RAGEILVAKETRSRHSD) are enriched in basic and acidic residues. Low complexity-rich tracts occupy residues 842-851 (GDQSSSSVSS) and 862-880 (GSDE…GWRW). The segment covering 881-891 (GSKKNKKKKRA) has biased composition (basic residues). 8 stretches are compositionally biased toward basic and acidic residues: residues 1068-1091 (LTKE…DAER), 1098-1145 (IDRD…KDSF), 1178-1198 (SQRR…RGSE), 1207-1226 (SKSE…RQPE), 1356-1365 (WGEHKTHEYE), 1375-1387 (SVDH…REQP), 1447-1462 (GRVE…ESKS), and 1478-1488 (EEKAPSSRVIE). Over residues 1506–1516 (QESSEPQTRTS) the composition is skewed to low complexity. 3 stretches are compositionally biased toward basic and acidic residues: residues 1521-1536 (VIDR…DGSR), 1549-1559 (GKERDESELRA), and 1572-1594 (EELR…DRRS). Basic residues predominate over residues 1639-1648 (KKKRRKRRSK). Basic and acidic residues-rich tracts occupy residues 1672–1686 (EKLK…EKKA), 1700–1773 (EPVD…QRRE), and 1788–1800 (KSGE…KLSE). 2 stretches are compositionally biased toward low complexity: residues 1867–1876 (PAPRSRSRPA) and 1889–1898 (SQSSRRSSIL). Residues 1950–1975 (KNSREMRPLWLVERHGPGHGEHKLEE) are compositionally biased toward basic and acidic residues. Composition is skewed to polar residues over residues 1984 to 1993 (KTSSANTSVE) and 2121 to 2130 (TPQNNVTAAS). Basic and acidic residues-rich tracts occupy residues 2187 to 2196 (DADRTHKPIA), 2269 to 2279 (VPRDDKRRDSV), and 2307 to 2320 (GENK…KNEN). The span at 2321 to 2331 (ANDNSQAQTEQ) shows a compositional bias: polar residues. Positions 2344–2355 (AKKKKKKNKKKR) are enriched in basic residues. Positions 2358–2370 (MDSNTQEPTTPVD) are enriched in polar residues. The span at 2427–2441 (DVEKAIEAPDVRKEL) shows a compositional bias: basic and acidic residues. Over residues 2449–2461 (APEDTPAEPTAET) the composition is skewed to low complexity. A compositionally biased stretch (basic residues) spans 2473–2484 (KKSKKKKKKKNK). Positions 2494-2525 (DPASTETPEASAANSQVVAAEQVESTLETTQP) are enriched in polar residues. Composition is skewed to basic and acidic residues over residues 2580–2590 (NQAKELPHPEE), 2647–2661 (PEDK…DLKS), and 2677–2691 (ALDK…RPAE). Residues 2719–2734 (EEPTPTAAELETPLSR) are compositionally biased toward low complexity. Basic residues predominate over residues 2735-2747 (KNSKKNKKKNKRK). Residues 2796 to 2812 (DENKGESRDVQAVKEET) show a composition bias toward basic and acidic residues. The segment covering 2874 to 2884 (KKKAKKKKNRK) has biased composition (basic residues). The segment covering 2885-2894 (TANVSESQPE) has biased composition (polar residues). 2 stretches are compositionally biased toward basic residues: residues 3003-3013 (KKSKKNKKKKQ) and 3089-3100 (KKTKKEKKKKRQ). The segment covering 3145 to 3172 (AIEHAEAAAEHSQEQPNKDVTLHADHSP) has biased composition (basic and acidic residues). A compositionally biased stretch (low complexity) spans 3248–3268 (PAMEGGAAAEELVAVEPDVLE). The segment covering 3293–3303 (ELVNAETTQKT) has biased composition (polar residues). Over residues 3329-3341 (SKKKDKKKKKKRQ) the composition is skewed to basic residues. Residues 3347-3367 (DEQRSSTKEEPTAEFSSDHVP) show a composition bias toward basic and acidic residues. Low complexity-rich tracts occupy residues 3397 to 3409 (TQTA…SSAS) and 3422 to 3435 (ESTQ…AQTA). A compositionally biased stretch (basic residues) spans 3436–3450 (KSKKKAKKDKKKRKS). Over residues 3480–3495 (EGPKPGDKPTSPKDSS) the composition is skewed to basic and acidic residues. Low complexity predominate over residues 3547-3564 (EEQAVVEETVAPPVVDEA). Composition is skewed to polar residues over residues 3565 to 3580 (SQLQ…LWSE) and 3604 to 3613 (VSPSLENNEG). Basic residues-rich tracts occupy residues 3642 to 3652 (KSKKNKKKKKR) and 3716 to 3730 (KAKK…KRQS). The segment covering 3768–3787 (TFSQETSETISTEAKSSEPS) has biased composition (polar residues). A compositionally biased stretch (basic and acidic residues) spans 3800-3819 (KENQSHDTEPHGGNDKDLTW). A compositionally biased stretch (polar residues) spans 3823 to 3837 (MVSSQVEQQQGTPSD). Residues 3876 to 3893 (DRLERSGEEGTRVKKEIV) are compositionally biased toward basic and acidic residues. Polar residues-rich tracts occupy residues 3915–3925 (ISSQGEDTIQV) and 3965–3980 (KDQF…SQSK). Acidic residues predominate over residues 4010–4020 (TSQDDSVDAVQ). The span at 4111-4123 (ESRENKFKEKQLA) shows a compositional bias: basic and acidic residues. The segment covering 4244–4255 (KNSKKKSKKAKK) has biased composition (basic residues). The segment covering 4328 to 4345 (LGQTPNMDNQTDDVQSTE) has biased composition (polar residues). The segment covering 4378–4391 (KLSKKDRRKAKKKS) has biased composition (basic residues). Positions 4392–4406 (AKDAIEPSDEPELRN) are enriched in basic and acidic residues. A septal pore-binding region region spans residues 4495–5538 (AIAEFDETAI…SSTMDISNVI (1044 aa)). Positions 4554–4570 (TEQSAGLQAKSVSSQGA) are enriched in polar residues. Composition is skewed to basic and acidic residues over residues 4574-4591 (IQDD…DQTK) and 4660-4673 (EESH…EKGP). Residues 4940–4954 (SSVSSVKSVQSTHSV) show a composition bias toward low complexity. The span at 4966 to 4988 (RNTSGDLRAASQAQESHGTQPHA) shows a compositional bias: polar residues. The span at 4989-4998 (TPQPPQPPPS) shows a compositional bias: pro residues. A coiled-coil region spans residues 5050–5223 (HRRSMQHLQE…QQQIAASLHD (174 aa)).

As to quaternary structure, binds directly or indirectly to the Woronin body major protein hexA.

The protein localises to the cell septum. Its function is as follows. Acts as the tether and is essential for anchoring of Woronin bodies at the septal pore. In damaged hyphae, Woronin bodies occlude septal pores in order to separate intact from damaged compartments. The protein is Leashin of Aspergillus fumigatus (strain ATCC MYA-4609 / CBS 101355 / FGSC A1100 / Af293) (Neosartorya fumigata).